Here is a 997-residue protein sequence, read N- to C-terminus: Bifunctional purine synthesis protein purC/E (997 aa).

Residues 1–305 form an SAICAR synthetase region; that stretch reads MTTAINNNIV…NNNNNNNNNS (305 aa). Composition is skewed to low complexity over residues 294-323, 342-355, and 524-536; these read LNNN…SLPN, QQQS…NVNS, and TSTS…TTTS. Disordered regions lie at residues 294–355, 518–538, 550–569, and 575–604; these read LNNN…NVNS, IPVD…TSNA, INSN…QQQT, and PTII…SSII. Positions 305–997 are AIR carboxylase; sequence SNNNNNNTSS…GRKMGHVTQQ (693 aa). Over residues 575-597 the composition is skewed to low complexity; the sequence is PTIINTPTPVRSSVSRSQSPLPS. Residues arginine 728, lysine 768, glutamine 779, 807 to 810, and glutamate 815 each bind ATP; that span reads EQYI. In terms of domain architecture, ATP-grasp spans 732–927; the sequence is KTFIQSLDIP…QFEQLIRCVC (196 aa). Mg(2+)-binding residues include glutamate 880 and glutamate 898. An ATP-binding site is contributed by 897-898; sequence NE.

In the N-terminal section; belongs to the SAICAR synthetase family. The protein in the C-terminal section; belongs to the AIR carboxylase family. Class I subfamily. Requires Mg(2+) as cofactor. It depends on Mn(2+) as a cofactor.

It catalyses the reaction 5-amino-1-(5-phospho-D-ribosyl)imidazole-4-carboxylate + L-aspartate + ATP = (2S)-2-[5-amino-1-(5-phospho-beta-D-ribosyl)imidazole-4-carboxamido]succinate + ADP + phosphate + 2 H(+). The enzyme catalyses 5-amino-1-(5-phospho-D-ribosyl)imidazole-4-carboxylate + H(+) = 5-amino-1-(5-phospho-beta-D-ribosyl)imidazole + CO2. It functions in the pathway purine metabolism; IMP biosynthesis via de novo pathway; 5-amino-1-(5-phospho-D-ribosyl)imidazole-4-carboxylate from 5-amino-1-(5-phospho-D-ribosyl)imidazole (carboxylase route): step 1/1. It participates in purine metabolism; IMP biosynthesis via de novo pathway; 5-amino-1-(5-phospho-D-ribosyl)imidazole-4-carboxamide from 5-amino-1-(5-phospho-D-ribosyl)imidazole-4-carboxylate: step 1/2. Functionally, bifunctional enzyme involved in de novo IMP synthesis, an essential step for de nove purine synthesis. This chain is Bifunctional purine synthesis protein purC/E (purC/E), found in Dictyostelium discoideum (Social amoeba).